The primary structure comprises 82 residues: Small ribosomal subunit protein uS17 (82 aa).

Belongs to the universal ribosomal protein uS17 family. Part of the 30S ribosomal subunit.

Functionally, one of the primary rRNA binding proteins, it binds specifically to the 5'-end of 16S ribosomal RNA. The chain is Small ribosomal subunit protein uS17 from Synechococcus elongatus (strain ATCC 33912 / PCC 7942 / FACHB-805) (Anacystis nidulans R2).